We begin with the raw amino-acid sequence, 172 residues long: Adenine phosphoribosyltransferase (172 aa).

It belongs to the purine/pyrimidine phosphoribosyltransferase family. In terms of assembly, homodimer.

The protein resides in the cytoplasm. The catalysed reaction is AMP + diphosphate = 5-phospho-alpha-D-ribose 1-diphosphate + adenine. Its pathway is purine metabolism; AMP biosynthesis via salvage pathway; AMP from adenine: step 1/1. In terms of biological role, catalyzes a salvage reaction resulting in the formation of AMP, that is energically less costly than de novo synthesis. The sequence is that of Adenine phosphoribosyltransferase from Clostridium perfringens (strain ATCC 13124 / DSM 756 / JCM 1290 / NCIMB 6125 / NCTC 8237 / Type A).